Reading from the N-terminus, the 449-residue chain is CBL-interacting protein kinase 31 (449 aa).

Residues Tyr-20–Phe-275 enclose the Protein kinase domain. Residues Ile-26 to Val-34 and Lys-49 contribute to the ATP site. Asp-143 functions as the Proton acceptor in the catalytic mechanism. Residues Asp-161–Glu-190 are activation loop. The 25-residue stretch at Asp-313–Glu-337 folds into the NAF domain.

This sequence belongs to the protein kinase superfamily. CAMK Ser/Thr protein kinase family. SNF1 subfamily. In terms of assembly, may interact with CBL3. It depends on Mn(2+) as a cofactor. In terms of processing, autophosphorylated. Highly expressed in leaf blade and leaf sheath, but not in other tissues.

It carries out the reaction L-seryl-[protein] + ATP = O-phospho-L-seryl-[protein] + ADP + H(+). It catalyses the reaction L-threonyl-[protein] + ATP = O-phospho-L-threonyl-[protein] + ADP + H(+). Its function is as follows. Involved in cold stress tolerance. CIPK serine-threonine protein kinases interact with CBL proteins. Binding of a CBL protein to the regulatory NAF domain of CIPK protein lead to the activation of the kinase in a calcium-dependent manner. The protein is CBL-interacting protein kinase 31 (CIPK31) of Oryza sativa subsp. japonica (Rice).